We begin with the raw amino-acid sequence, 82 residues long: Large ribosomal subunit protein bL27c (82 aa).

Residues 1–22 (MAHKKGAGSTKNGRDSNSKRLG) form a disordered region.

It belongs to the bacterial ribosomal protein bL27 family.

The protein localises to the plastid. It localises to the chloroplast. The sequence is that of Large ribosomal subunit protein bL27c (rpl27) from Chrysotila carterae (Marine alga).